The chain runs to 454 residues: Putative KilA-N domain-containing protein L4 (454 aa).

The span at 1–12 (MPQKTSKSKSSR) shows a compositional bias: basic residues. Positions 1-159 (MPQKTSKSKS…DVPEEEYDDN (159 aa)) are disordered. Residues 14-64 (RYIEDSDDETRGRSRNRSIEKSRSRSLDKSQKKSRDKSLTRSRSKSPEKSK) are compositionally biased toward basic and acidic residues. The segment covering 65 to 79 (SRSKSLTRSRSKSPK) has biased composition (basic residues). Composition is skewed to acidic residues over residues 98 to 123 (YTTEESDEESDDESDGETNEESDEEL) and 130 to 158 (ESDEEISEESDEEISEESDEDVPEEEYDD). Residues 172–276 (EFARGKFGDF…LKVSDIVIEY (105 aa)) form the KilA-N domain.

The protein is Putative KilA-N domain-containing protein L4 of Acanthamoeba polyphaga mimivirus (APMV).